We begin with the raw amino-acid sequence, 670 residues long: Extracellular matrix protein 2 (670 aa).

The N-terminal stretch at 1-19 is a signal peptide; sequence MKLAVLFCFILLIVLQTDC. The VWFC domain occupies 96 to 153; the sequence is GYCFVKGMIMYNKAVWSPEPCTTCLCSNGRVLCDETECHPKACPYTIKPEGECCPICS. Positions 185-270 are disordered; sequence SEEDEEIAEG…EEDAIRGDVF (86 aa). Positions 192–227 are enriched in basic and acidic residues; that stretch reads AEGHKEHKKETSVPTKIHGDGERTERKLRPEKEGRS. Residues 241–263 show a composition bias toward acidic residues; that stretch reads ESKEETEREGEEEEEEEEEEEED. The Cell attachment site motif lies at 266–268; that stretch reads RGD. Residues 278-315 enclose the LRRNT domain; the sequence is PGTPRGRPRLPRSCSLSYRTISCVHADFTEIPPITAPE. 13 LRR repeats span residues 339–359, 365–386, 387–407, 410–430, 436–456, 457–478, 481–501, 507–528, 529–549, 553–573, 580–601, 603–624, and 632–655; these read NLERLDLSRNNITSSGIGPKA, KLMRLNMDGNNLVHIPSDLPST, LEELKINDNNLQAIDEKSLSD, QLVTLELEGNNLSEINVDPLA, SLSYLRLGRNKFRIIPQGLPA, STEELYLENNQIEEITEICFNH, KITMIILRYNKIEESRIAPLA, NLESIDLSYNKLYHVPSYLPKS, LLHLVLIGNQIDRIPGYVFGH, GLEYLYLSFNRLSDDGVDLVS, SLRELFLDHNDFKSIPPGIQDM, ALHFLRLNNNKIRNIHPEQICN, and ALEHLHLENNYIRTREISSYAFSC. Asn349 carries an N-linked (GlcNAc...) asparagine glycan. The N-linked (GlcNAc...) asparagine glycan is linked to Asn420. Asn477 is a glycosylation site (N-linked (GlcNAc...) asparagine).

This sequence belongs to the small leucine-rich proteoglycan (SLRP) family. SLRP class I subfamily. Interacts with numerous extracellular matrix proteins. Interacts with isoform 1 of MSL1. Interacts with isoform 3 of RASSF1.

The protein resides in the secreted. The protein localises to the extracellular space. Its subcellular location is the extracellular matrix. Its function is as follows. Promotes matrix assembly and cell adhesiveness. This Mus musculus (Mouse) protein is Extracellular matrix protein 2 (Ecm2).